A 105-amino-acid polypeptide reads, in one-letter code: Large ribosomal subunit protein uL24 (105 aa).

The protein belongs to the universal ribosomal protein uL24 family. As to quaternary structure, part of the 50S ribosomal subunit.

One of two assembly initiator proteins, it binds directly to the 5'-end of the 23S rRNA, where it nucleates assembly of the 50S subunit. Functionally, one of the proteins that surrounds the polypeptide exit tunnel on the outside of the subunit. The polypeptide is Large ribosomal subunit protein uL24 (Wolbachia pipientis wMel).